The primary structure comprises 839 residues: Enhancer of polycomb-like protein 1 (839 aa).

4 disordered regions span residues 350–379, 393–415, 608–640, and 679–839; these read QKKR…AGSA, GSGS…PSKI, LADR…ISSD, and QQQQ…KVDA. Basic and acidic residues predominate over residues 608–620; sequence LADRQKYDRETEP. The span at 621 to 640 shows a compositional bias: polar residues; it reads TRQMSSYDKDPSQLNGISSD. A compositionally biased stretch (low complexity) spans 679-690; sequence QQQQQQMRNRQQ. The span at 697-713 shows a compositional bias: gly residues; it reads PGAGLGGGQGAGGGAGG. Positions 714–730 are enriched in polar residues; it reads SRNNSPAPGTNGPQSKM. Low complexity predominate over residues 747–786; sequence QHQQYQQMQQQQQQQQQQQQQRKMGVAPMNAASAAAAMAA. Over residues 828 to 839 the composition is skewed to basic and acidic residues; that stretch reads MKQKSELAKVDA.

It belongs to the enhancer of polycomb family. In terms of assembly, component of the NuA4 histone acetyltransferase complex.

Its subcellular location is the nucleus. In terms of biological role, component of the NuA4 histone acetyltransferase complex which is involved in transcriptional activation of selected genes principally by acetylation of nucleosomal histone H4 and H2A. The NuA4 complex is also involved in DNA repair. Involved in gene silencing by neighboring heterochromatin, blockage of the silencing spreading along the chromosome, and required for cell cycle progression through G2/M. The polypeptide is Enhancer of polycomb-like protein 1 (EPL1) (Yarrowia lipolytica (strain CLIB 122 / E 150) (Yeast)).